A 171-amino-acid polypeptide reads, in one-letter code: Endoribonuclease YbeY (171 aa).

Zn(2+)-binding residues include His-126, His-130, and His-136.

The protein belongs to the endoribonuclease YbeY family. Zn(2+) serves as cofactor.

It is found in the cytoplasm. In terms of biological role, single strand-specific metallo-endoribonuclease involved in late-stage 70S ribosome quality control and in maturation of the 3' terminus of the 16S rRNA. In Rhizobium leguminosarum bv. trifolii (strain WSM2304), this protein is Endoribonuclease YbeY.